Consider the following 1701-residue polypeptide: Rho guanine nucleotide exchange factor TIAM2 (1701 aa).

4 disordered regions span residues 1 to 21 (MGNS…NTIT), 201 to 250 (SPTL…SSWY), 265 to 293 (GSFL…FNQS), and 389 to 417 (SLSR…DGLN). Gly-2 carries N-myristoyl glycine lipidation. Residues 238 to 248 (SKGSSLSSESS) are compositionally biased toward low complexity. Basic and acidic residues predominate over residues 397 to 413 (LQEPRSKEGSDYFDSRS). The PH 1 domain maps to 506-620 (VVRKAGWLFF…WVTAVHSACA (115 aa)). The stretch at 628–695 (GKEDTLRLLK…KFHMDLFRMR (68 aa)) forms a coiled coil. The RBD domain occupies 810-881 (IQTYVHFQDN…YMQQQVYDEI (72 aa)). Residues 890-976 (DVQLTKTGSV…GLTLIARPPD (87 aa)) form the PDZ domain. Residues 1070–1092 (DSQANGMEGPRENQDPPPRSLAR) are disordered. One can recognise a DH domain in the interval 1099–1293 (RLRKVIQELV…EKVASHINEM (195 aa)). Residues 1347-1478 (DLELTVFVFK…EKTCKDRLVP (132 aa)) form the PH 2 domain. Disordered regions lie at residues 1500 to 1556 (NSSS…GLAD) and 1568 to 1628 (LSDE…PKLV). The span at 1513-1527 (GTLLDSDEGSLSSGT) shows a compositional bias: low complexity. At Ser-1583 the chain carries Phosphoserine. Residues 1596 to 1607 (RISEDPDVHPEA) show a composition bias toward basic and acidic residues. Thr-1648 bears the Phosphothreonine mark.

The protein belongs to the TIAM family. As to quaternary structure, interacts with MAP1A, MAP1B, PARP1 and YWHAE. Interacts with CD44, PARD3 and MAPK8IP2. In terms of processing, phosphorylated on serine and threonine residues. Phosphorylated on Thr-1648 by Rho-kinase. Its phosphorylation by Rho-kinase inhibits its guanine nucleotide exchange activity, its interaction with MAP1A, MAP1B, PARP1 and YWHAE and reduces its ability to promote neurite growth. Expressed in the occipital, frontal and temporal lobes, cerebellum, putamen and testis.

The protein localises to the cytoplasm. It localises to the cell projection. The protein resides in the lamellipodium. Its subcellular location is the filopodium. It is found in the growth cone. The protein localises to the neuron projection. It localises to the perikaryon. In terms of biological role, modulates the activity of RHO-like proteins and connects extracellular signals to cytoskeletal activities. Acts as a GDP-dissociation stimulator protein that stimulates the GDP-GTP exchange activity of RHO-like GTPases and activates them. Mediates extracellular laminin signals to activate Rac1, contributing to neurite growth. Involved in lamellipodial formation and advancement of the growth cone of embryonic hippocampal neurons. Promotes migration of neurons in the cerebral cortex. When overexpressed, induces membrane ruffling accompanied by the accumulation of actin filaments along the altered plasma membrane. Activates specifically RAC1, but not CDC42 and RHOA. This chain is Rho guanine nucleotide exchange factor TIAM2 (TIAM2), found in Homo sapiens (Human).